We begin with the raw amino-acid sequence, 227 residues long: Cytidylate kinase (227 aa).

10–18 (GPASSGKST) is an ATP binding site.

Belongs to the cytidylate kinase family. Type 1 subfamily.

It localises to the cytoplasm. The catalysed reaction is CMP + ATP = CDP + ADP. It catalyses the reaction dCMP + ATP = dCDP + ADP. The protein is Cytidylate kinase of Streptococcus agalactiae serotype V (strain ATCC BAA-611 / 2603 V/R).